The chain runs to 511 residues: Probable cytosol aminopeptidase (511 aa).

Mn(2+) is bound by residues K255 and D260. K267 is an active-site residue. Positions 278, 337, and 339 each coordinate Mn(2+). R341 is an active-site residue. Residues 485–511 (GAAQAVSPKKAARKEPGAAARKARSAQ) form a disordered region.

The protein belongs to the peptidase M17 family. Mn(2+) serves as cofactor.

It localises to the cytoplasm. It carries out the reaction Release of an N-terminal amino acid, Xaa-|-Yaa-, in which Xaa is preferably Leu, but may be other amino acids including Pro although not Arg or Lys, and Yaa may be Pro. Amino acid amides and methyl esters are also readily hydrolyzed, but rates on arylamides are exceedingly low.. The catalysed reaction is Release of an N-terminal amino acid, preferentially leucine, but not glutamic or aspartic acids.. Functionally, presumably involved in the processing and regular turnover of intracellular proteins. Catalyzes the removal of unsubstituted N-terminal amino acids from various peptides. This chain is Probable cytosol aminopeptidase, found in Variovorax paradoxus (strain S110).